A 239-amino-acid chain; its full sequence is Putative 3-methyladenine DNA glycosylase (239 aa).

Belongs to the DNA glycosylase MPG family.

The polypeptide is Putative 3-methyladenine DNA glycosylase (Pseudomonas aeruginosa (strain LESB58)).